The primary structure comprises 251 residues: Protein TK1472 (251 aa).

The protein belongs to the CinA family.

In Thermococcus kodakarensis (strain ATCC BAA-918 / JCM 12380 / KOD1) (Pyrococcus kodakaraensis (strain KOD1)), this protein is Protein TK1472.